The sequence spans 75 residues: Exodeoxyribonuclease 7 small subunit (75 aa).

Belongs to the XseB family. In terms of assembly, heterooligomer composed of large and small subunits.

The protein localises to the cytoplasm. It carries out the reaction Exonucleolytic cleavage in either 5'- to 3'- or 3'- to 5'-direction to yield nucleoside 5'-phosphates.. Its function is as follows. Bidirectionally degrades single-stranded DNA into large acid-insoluble oligonucleotides, which are then degraded further into small acid-soluble oligonucleotides. This is Exodeoxyribonuclease 7 small subunit from Elusimicrobium minutum (strain Pei191).